The chain runs to 294 residues: Light-independent protochlorophyllide reductase iron-sulfur ATP-binding protein (294 aa).

ATP-binding positions include 10 to 15 and Lys-39; that span reads GIGKST. Ser-14 is a binding site for Mg(2+). Residues Cys-95 and Cys-129 each contribute to the [4Fe-4S] cluster site. Position 180 to 181 (180 to 181) interacts with ATP; the sequence is NR.

It belongs to the NifH/BchL/ChlL family. As to quaternary structure, homodimer. Protochlorophyllide reductase is composed of three subunits; ChlL, ChlN and ChlB. Requires [4Fe-4S] cluster as cofactor.

The protein localises to the plastid. Its subcellular location is the chloroplast. It catalyses the reaction chlorophyllide a + oxidized 2[4Fe-4S]-[ferredoxin] + 2 ADP + 2 phosphate = protochlorophyllide a + reduced 2[4Fe-4S]-[ferredoxin] + 2 ATP + 2 H2O. The protein operates within porphyrin-containing compound metabolism; chlorophyll biosynthesis (light-independent). In terms of biological role, component of the dark-operative protochlorophyllide reductase (DPOR) that uses Mg-ATP and reduced ferredoxin to reduce ring D of protochlorophyllide (Pchlide) to form chlorophyllide a (Chlide). This reaction is light-independent. The L component serves as a unique electron donor to the NB-component of the complex, and binds Mg-ATP. The polypeptide is Light-independent protochlorophyllide reductase iron-sulfur ATP-binding protein (Pleurastrum terricola (Filamentous green alga)).